We begin with the raw amino-acid sequence, 507 residues long: Bifunctional purine biosynthesis protein PurH (507 aa).

Residues 1–144 form the MGS-like domain; it reads MKRALLSVSD…KNSDSVWAVV (144 aa).

This sequence belongs to the PurH family.

The catalysed reaction is (6R)-10-formyltetrahydrofolate + 5-amino-1-(5-phospho-beta-D-ribosyl)imidazole-4-carboxamide = 5-formamido-1-(5-phospho-D-ribosyl)imidazole-4-carboxamide + (6S)-5,6,7,8-tetrahydrofolate. The enzyme catalyses IMP + H2O = 5-formamido-1-(5-phospho-D-ribosyl)imidazole-4-carboxamide. The protein operates within purine metabolism; IMP biosynthesis via de novo pathway; 5-formamido-1-(5-phospho-D-ribosyl)imidazole-4-carboxamide from 5-amino-1-(5-phospho-D-ribosyl)imidazole-4-carboxamide (10-formyl THF route): step 1/1. It participates in purine metabolism; IMP biosynthesis via de novo pathway; IMP from 5-formamido-1-(5-phospho-D-ribosyl)imidazole-4-carboxamide: step 1/1. In Lacticaseibacillus paracasei (strain ATCC 334 / BCRC 17002 / CCUG 31169 / CIP 107868 / KCTC 3260 / NRRL B-441) (Lactobacillus paracasei), this protein is Bifunctional purine biosynthesis protein PurH.